The primary structure comprises 493 residues: 11S globulin seed storage protein G3 (493 aa).

Residues M1–A20 form the signal peptide. 2 disulfides stabilise this stretch: C32/C65 and C103/C312. Residues I37–Q248 form the Cupin type-1 1 domain. 2 disordered regions span residues P190 to N229 and I269 to N305. Low complexity-rich tracts occupy residues Q191–G221 and R280–G298. The Cupin type-1 2 domain occupies V318–Q467.

The protein belongs to the 11S seed storage protein (globulins) family. Hexamer; each subunit is composed of an acidic and a basic chain derived from a single precursor and linked by a disulfide bond.

Its function is as follows. This is a seed storage protein. This is 11S globulin seed storage protein G3 (HAG3) from Helianthus annuus (Common sunflower).